A 277-amino-acid polypeptide reads, in one-letter code: 4-hydroxy-tetrahydrodipicolinate reductase (277 aa).

Residues 11 to 16 (GALGRM) and 110 to 112 (GTT) each bind NAD(+). His166 serves as the catalytic Proton donor/acceptor. Position 167 (His167) interacts with (S)-2,3,4,5-tetrahydrodipicolinate. Lys170 (proton donor) is an active-site residue. 176–177 (GT) is a binding site for (S)-2,3,4,5-tetrahydrodipicolinate.

This sequence belongs to the DapB family.

The protein localises to the cytoplasm. The enzyme catalyses (S)-2,3,4,5-tetrahydrodipicolinate + NAD(+) + H2O = (2S,4S)-4-hydroxy-2,3,4,5-tetrahydrodipicolinate + NADH + H(+). The catalysed reaction is (S)-2,3,4,5-tetrahydrodipicolinate + NADP(+) + H2O = (2S,4S)-4-hydroxy-2,3,4,5-tetrahydrodipicolinate + NADPH + H(+). It functions in the pathway amino-acid biosynthesis; L-lysine biosynthesis via DAP pathway; (S)-tetrahydrodipicolinate from L-aspartate: step 4/4. In terms of biological role, catalyzes the conversion of 4-hydroxy-tetrahydrodipicolinate (HTPA) to tetrahydrodipicolinate. This chain is 4-hydroxy-tetrahydrodipicolinate reductase, found in Parasynechococcus marenigrum (strain WH8102).